We begin with the raw amino-acid sequence, 210 residues long: Imidazoleglycerol-phosphate dehydratase (210 aa).

This sequence belongs to the imidazoleglycerol-phosphate dehydratase family.

The catalysed reaction is D-erythro-1-(imidazol-4-yl)glycerol 3-phosphate = 3-(imidazol-4-yl)-2-oxopropyl phosphate + H2O. It functions in the pathway amino-acid biosynthesis; L-histidine biosynthesis; L-histidine from 5-phospho-alpha-D-ribose 1-diphosphate: step 6/9. The polypeptide is Imidazoleglycerol-phosphate dehydratase (HIS3) (Candida glabrata (strain ATCC 2001 / BCRC 20586 / JCM 3761 / NBRC 0622 / NRRL Y-65 / CBS 138) (Yeast)).